The sequence spans 485 residues: Probable glycine dehydrogenase (decarboxylating) subunit 2 (485 aa).

The residue at position 273 (lysine 273) is an N6-(pyridoxal phosphate)lysine.

Belongs to the GcvP family. C-terminal subunit subfamily. As to quaternary structure, the glycine cleavage system is composed of four proteins: P, T, L and H. In this organism, the P 'protein' is a heterodimer of two subunits. The cofactor is pyridoxal 5'-phosphate.

The enzyme catalyses N(6)-[(R)-lipoyl]-L-lysyl-[glycine-cleavage complex H protein] + glycine + H(+) = N(6)-[(R)-S(8)-aminomethyldihydrolipoyl]-L-lysyl-[glycine-cleavage complex H protein] + CO2. In terms of biological role, the glycine cleavage system catalyzes the degradation of glycine. The P protein binds the alpha-amino group of glycine through its pyridoxal phosphate cofactor; CO(2) is released and the remaining methylamine moiety is then transferred to the lipoamide cofactor of the H protein. This Oceanobacillus iheyensis (strain DSM 14371 / CIP 107618 / JCM 11309 / KCTC 3954 / HTE831) protein is Probable glycine dehydrogenase (decarboxylating) subunit 2.